Consider the following 452-residue polypeptide: NADH-quinone oxidoreductase subunit N 2 (452 aa).

14 helical membrane-spanning segments follow: residues 6-26 (VLIP…YGFI), 33-53 (TYIL…FNFG), 70-90 (TLRI…YSDL), 97-117 (SVEY…MIVA), 120-140 (LLIL…LAGF), 154-174 (YFIL…FFYA), 194-214 (ILLG…LAPF), 232-252 (FLST…FLSI), 258-278 (IQDL…VLAL), 286-306 (MLAY…LLPE), 311-331 (ISLI…FAFI), 355-375 (FCII…GFIV), 387-407 (GYGS…FYYL), and 432-452 (ALSG…LLIF).

This sequence belongs to the complex I subunit 2 family. As to quaternary structure, NDH-1 is composed of 14 different subunits. Subunits NuoA, H, J, K, L, M, N constitute the membrane sector of the complex.

Its subcellular location is the cell inner membrane. The catalysed reaction is a quinone + NADH + 5 H(+)(in) = a quinol + NAD(+) + 4 H(+)(out). NDH-1 shuttles electrons from NADH, via FMN and iron-sulfur (Fe-S) centers, to quinones in the respiratory chain. The immediate electron acceptor for the enzyme in this species is believed to be ubiquinone. Couples the redox reaction to proton translocation (for every two electrons transferred, four hydrogen ions are translocated across the cytoplasmic membrane), and thus conserves the redox energy in a proton gradient. This chain is NADH-quinone oxidoreductase subunit N 2, found in Thermodesulfovibrio yellowstonii (strain ATCC 51303 / DSM 11347 / YP87).